Reading from the N-terminus, the 260-residue chain is Thiazole synthase (260 aa).

Lys-96 acts as the Schiff-base intermediate with DXP in catalysis. 1-deoxy-D-xylulose 5-phosphate contacts are provided by residues Gly-157, 184-185 (AG), and 206-207 (NT).

This sequence belongs to the ThiG family. Homotetramer. Forms heterodimers with either ThiH or ThiS.

It localises to the cytoplasm. It catalyses the reaction [ThiS sulfur-carrier protein]-C-terminal-Gly-aminoethanethioate + 2-iminoacetate + 1-deoxy-D-xylulose 5-phosphate = [ThiS sulfur-carrier protein]-C-terminal Gly-Gly + 2-[(2R,5Z)-2-carboxy-4-methylthiazol-5(2H)-ylidene]ethyl phosphate + 2 H2O + H(+). It participates in cofactor biosynthesis; thiamine diphosphate biosynthesis. Functionally, catalyzes the rearrangement of 1-deoxy-D-xylulose 5-phosphate (DXP) to produce the thiazole phosphate moiety of thiamine. Sulfur is provided by the thiocarboxylate moiety of the carrier protein ThiS. In vitro, sulfur can be provided by H(2)S. The protein is Thiazole synthase of Rhodopseudomonas palustris (strain BisB18).